The chain runs to 100 residues: Trp operon repressor homolog (100 aa).

Residues 59–82 (QRQISQMLGVGIATITRGSNELKS) mediate DNA binding. Basic and acidic residues predominate over residues 78-93 (NELKSKSDTDKDKLKT). Residues 78-100 (NELKSKSDTDKDKLKTLLEQGAQ) form a disordered region.

It belongs to the TrpR family. Homodimer.

The protein localises to the cytoplasm. In terms of biological role, this protein is an aporepressor. When complexed with L-tryptophan it binds the operator region of the trp operon and prevents the initiation of transcription. The chain is Trp operon repressor homolog from Vibrio campbellii (strain ATCC BAA-1116).